A 620-amino-acid chain; its full sequence is Glutathione-regulated potassium-efflux system protein KefC (620 aa).

12 helical membrane-spanning segments follow: residues 4–24, 26–46, 54–74, 90–110, 114–134, 149–169, 178–198, 218–238, 270–290, 294–314, 327–347, and 359–379; these read HTLL…PIAV, LGLG…PWGL, SILH…GLEL, GALQ…FLGL, VAEL…MQAM, FAVL…IPLL, LGAF…VVLL, VFSA…EEVG, GLLL…GTLV, LRIL…LWLV, WFAV…GAAQ, and ALTL…VLLT. Positions 399-518 constitute an RCK N-terminal domain; the sequence is QPRVIVAGFG…AGVAMPERET (120 aa). Positions 599–620 are disordered; it reads QGTAEGKHSGEAADEPEVKPSI.

The protein belongs to the monovalent cation:proton antiporter 2 (CPA2) transporter (TC 2.A.37) family. KefC subfamily. Homodimer. Interacts with the regulatory subunit KefF.

The protein resides in the cell inner membrane. Pore-forming subunit of a potassium efflux system that confers protection against electrophiles. Catalyzes K(+)/H(+) antiport. This Salmonella schwarzengrund (strain CVM19633) protein is Glutathione-regulated potassium-efflux system protein KefC.